Reading from the N-terminus, the 410-residue chain is Putative formamidase C869.04 (410 aa).

The protein belongs to the acetamidase/formamidase family. As to quaternary structure, homotrimer.

It is found in the cytoplasm. The protein resides in the nucleus. The catalysed reaction is formamide + H2O = formate + NH4(+). Its function is as follows. Hydrolyzes formamide with the production of ammonia which can be used as a source of nitrogen for growth. May also act on acetamide, propanamide and butanamide. The protein is Putative formamidase C869.04 of Schizosaccharomyces pombe (strain 972 / ATCC 24843) (Fission yeast).